A 443-amino-acid chain; its full sequence is MKAQSKRTSRLLILLGIAVAIIVAVFVWRHFSATPDGSTGAQQHAVGNNPARAGGRRNMPMPPVQAATATEQAVPRYLTGLGTVIAANTVTVTSQVDGQLMAIHFTEGQQVNAGDLLVEIDPRPYQVQLTQAQGQLAKDQATLDNARRDLARYQKLAKTGLISQQDLDTQASLVRQSEGSVKADQGAIDSAKLQLTYSRITAPISGKVGLKQVDVGNYITSGTTTPIVVITQTHPVDVVFTLPESDIPAIMQAQKNAAKNNTTVPVEAWDRTNKQMLAQGYLLSIDNQIDTTTGTIKLKARFANEDDVLFPNQFVNARIKVDLLQNAVVVPTAAVQMGNEGSFVWTLNDENKVSKHLVTTGIQDSKQVVISAGLDAGQRVVTDGIDRLTEGLQVEVVTPRSADTTPTDAAEKPATAEKATHRRGEKSATGASAGSTTTAAEKS.

Residues 1-24 form the signal peptide; it reads MKAQSKRTSRLLILLGIAVAIIVA. The span at 36 to 46 shows a compositional bias: polar residues; it reads DGSTGAQQHAV. Disordered regions lie at residues 36–57 and 398–443; these read DGST…GGRR and TPRS…AEKS. A compositionally biased stretch (basic and acidic residues) spans 409 to 419; that stretch reads AAEKPATAEKA. Positions 427 to 443 are enriched in low complexity; sequence SATGASAGSTTTAAEKS.

It belongs to the membrane fusion protein (MFP) (TC 8.A.1) family. As to quaternary structure, part of a tripartite efflux system composed of MdtA, MdtB and MdtC.

The protein localises to the cell inner membrane. The chain is Multidrug resistance protein MdtA from Yersinia enterocolitica serotype O:8 / biotype 1B (strain NCTC 13174 / 8081).